The sequence spans 238 residues: MKLSLLSLATLASAASLQRRSDFCGQWDTATAGDFTLYNDLWGESAGTGSQCTGVDSYSGDTIAWHTSWSWSGGSSSVKSYVNAALTFTPTQLNCISSIPTTWKWSYSGSSIVADVAYDTFLAETASGSSKYEIMVWLAALGGAGPISSTGSTIATPTIAGVNWKLYSGPNGDTTVYSFVADSTTESFSGDLNDFFTYLVDNEGVSDELYLTTLEAGTEPFTGSNAKLTVSEYSISIE.

The first 14 residues, 1 to 14, serve as a signal peptide directing secretion; the sequence is MKLSLLSLATLASA.

It belongs to the glycosyl hydrolase 12 (cellulase H) family.

It localises to the secreted. The enzyme catalyses xyloglucan + H2O = xyloglucan oligosaccharides.. Catalyzes endohydrolysis of 1,4-beta-D-glucosidic linkages in xyloglucan with retention of the beta-configuration of the glycosyl residues. Specific for xyloglucan and does not hydrolyze other cell wall components. This Aspergillus aculeatus protein is Xyloglucan-specific endo-beta-1,4-glucanase A (xgeA).